The primary structure comprises 538 residues: Atos homolog protein B (538 aa).

Disordered regions lie at residues 1–103, 130–149, 163–185, and 199–272; these read MRHV…GLVS, GSAT…PSSN, PDQG…QLHT, and KSPV…LGCP. Residues 130–148 show a composition bias toward low complexity; the sequence is GSATSSWTSGTQSTPWPSS. Residues 227 to 238 are compositionally biased toward pro residues; it reads HTPPGPGPPGPC. 2 positions are modified to phosphoserine: S254 and S255. A required for macropage invasion region spans residues 348-430; it reads LLGNFEESLL…VPKVGTIQVT (83 aa). Residues 436–444 form a transactivation domain 1 (TAD1) region; sequence QTVVKMFLV.

It belongs to the ATOS family.

Its subcellular location is the nucleus. In terms of biological role, transcription regulator that may syncronize transcriptional and translational programs. The polypeptide is Atos homolog protein B (Rattus norvegicus (Rat)).